Reading from the N-terminus, the 732-residue chain is Ionotropic receptor 40a (732 aa).

A signal peptide spans Met1–Ser19. Residues Asn18, Asn235, and Asn299 are each glycosylated (N-linked (GlcNAc...) asparagine). Residues Thr20–His369 lie on the Extracellular side of the membrane. Residues Leu370 to Ile390 form a helical membrane-spanning segment. The Cytoplasmic segment spans residues Trp391 to Lys465. Residues Phe466–Gln486 form a helical membrane-spanning segment. The Extracellular segment spans residues Leu487–Phe688. The N-linked (GlcNAc...) asparagine glycan is linked to Asn531. A helical membrane pass occupies residues Ile689–Ile709. At Lys710–Val732 the chain is on the cytoplasmic side.

The protein belongs to the glutamate-gated ion channel (TC 1.A.10.1) family. As to expression, in the antenna, detected in sacculus neurons which innervate the first and second chambers (at protein level).

The protein resides in the cell membrane. In terms of biological role, integral part of a neural sensory system in the antenna that provides the neural basis for the response to environmental changes in humidity (hygrosensation). Together with Ir25a and Ir93a, mediates the response of the hygrosensory sacculus neurons to changes in relative humidity and is required for dry detection behavior. The chain is Ionotropic receptor 40a from Drosophila melanogaster (Fruit fly).